Here is a 483-residue protein sequence, read N- to C-terminus: Glycogen synthase (483 aa).

Lys18 contributes to the ADP-alpha-D-glucose binding site.

It belongs to the glycosyltransferase 1 family. Bacterial/plant glycogen synthase subfamily.

It carries out the reaction [(1-&gt;4)-alpha-D-glucosyl](n) + ADP-alpha-D-glucose = [(1-&gt;4)-alpha-D-glucosyl](n+1) + ADP + H(+). The protein operates within glycan biosynthesis; glycogen biosynthesis. Functionally, synthesizes alpha-1,4-glucan chains using ADP-glucose. The chain is Glycogen synthase from Methylocella silvestris (strain DSM 15510 / CIP 108128 / LMG 27833 / NCIMB 13906 / BL2).